The sequence spans 378 residues: UDP-N-acetylglucosamine--N-acetylmuramyl-(pentapeptide) pyrophosphoryl-undecaprenol N-acetylglucosamine transferase (378 aa).

UDP-N-acetyl-alpha-D-glucosamine is bound by residues 14–16 (TGG), Asn-125, Arg-165, Ser-193, and Gln-293.

It belongs to the glycosyltransferase 28 family. MurG subfamily.

It localises to the cell inner membrane. It catalyses the reaction di-trans,octa-cis-undecaprenyl diphospho-N-acetyl-alpha-D-muramoyl-L-alanyl-D-glutamyl-meso-2,6-diaminopimeloyl-D-alanyl-D-alanine + UDP-N-acetyl-alpha-D-glucosamine = di-trans,octa-cis-undecaprenyl diphospho-[N-acetyl-alpha-D-glucosaminyl-(1-&gt;4)]-N-acetyl-alpha-D-muramoyl-L-alanyl-D-glutamyl-meso-2,6-diaminopimeloyl-D-alanyl-D-alanine + UDP + H(+). The protein operates within cell wall biogenesis; peptidoglycan biosynthesis. Functionally, cell wall formation. Catalyzes the transfer of a GlcNAc subunit on undecaprenyl-pyrophosphoryl-MurNAc-pentapeptide (lipid intermediate I) to form undecaprenyl-pyrophosphoryl-MurNAc-(pentapeptide)GlcNAc (lipid intermediate II). The chain is UDP-N-acetylglucosamine--N-acetylmuramyl-(pentapeptide) pyrophosphoryl-undecaprenol N-acetylglucosamine transferase from Bartonella tribocorum (strain CIP 105476 / IBS 506).